A 30-amino-acid polypeptide reads, in one-letter code: RCAHGTYYSNDSQQCLLNCCWWGGGDHCCR.

Post-translationally, contains 3 disulfide bonds. As to expression, expressed by the venom duct.

The protein resides in the secreted. In Conus betulinus (Beech cone), this protein is Conotoxin Bt12.1.